A 372-amino-acid chain; its full sequence is MHNQAPIQRRKSTRIYVGNVPIGDGAPITVQSMTNTRTTDVEATVNQIKALERVGADIVRVSVPTMDAAEAFKLIKQQVNVPLVADIHFDYRIALKVAEYGVDCLRINPGNIGNEERIRMVVDCARDKNIPIRIGVNAGSLEKDLQEKYGEPTPQALLESAMRHVDHLDRLNFDQFKVSVKASDVFLAVESYRLLAKQIDQPLHLGITEAGGARSGAVKSAIGLGLLLSEGIGDTLRVSLAADPVEEIKVGFDILKSLRIRARGINFIACPTCSRQEFDVIGTVNALEQRLEDIITPMDVSIIGCVVNGPGEALVSTLGVTGGNKKSGLYEDGVRKDRLDNDDMIAQLESRIRAKASQLDEARRIDVLQVEK.

[4Fe-4S] cluster contacts are provided by C270, C273, C305, and E312.

Belongs to the IspG family. [4Fe-4S] cluster is required as a cofactor.

The enzyme catalyses (2E)-4-hydroxy-3-methylbut-2-enyl diphosphate + oxidized [flavodoxin] + H2O + 2 H(+) = 2-C-methyl-D-erythritol 2,4-cyclic diphosphate + reduced [flavodoxin]. It functions in the pathway isoprenoid biosynthesis; isopentenyl diphosphate biosynthesis via DXP pathway; isopentenyl diphosphate from 1-deoxy-D-xylulose 5-phosphate: step 5/6. Functionally, converts 2C-methyl-D-erythritol 2,4-cyclodiphosphate (ME-2,4cPP) into 1-hydroxy-2-methyl-2-(E)-butenyl 4-diphosphate. This chain is 4-hydroxy-3-methylbut-2-en-1-yl diphosphate synthase (flavodoxin), found in Salmonella schwarzengrund (strain CVM19633).